Here is a 68-residue protein sequence, read N- to C-terminus: Large ribosomal subunit protein uL29 (68 aa).

The protein belongs to the universal ribosomal protein uL29 family.

This Acidiphilium cryptum (strain JF-5) protein is Large ribosomal subunit protein uL29.